We begin with the raw amino-acid sequence, 70 residues long: U-actitoxin-Ael2c (70 aa).

Residues 1–21 (SYQRFLFLVVVASLIATSLAI) form the signal peptide. The propeptide occupies 22-26 (PKDLE). 3 cysteine pairs are disulfide-bonded: Cys32–Cys65, Cys34–Cys58, and Cys48–Cys66.

The protein belongs to the sea anemone type 3 (BDS) potassium channel toxin family.

It localises to the secreted. Its subcellular location is the nematocyst. Potently and selectively inhibits voltage-gated potassium channels Kv11/KCNH/ERG. Acts as a gating-modifier toxin that shifts the voltage-dependence of ERG activation in the positive direction and suppresses its current amplitudes elicited by strong depolarizing pulses that maximally activate the channels. The sequence is that of U-actitoxin-Ael2c from Anthopleura elegantissima (Green aggregating anemone).